The primary structure comprises 522 residues: GMP synthase [glutamine-hydrolyzing] (522 aa).

A Glutamine amidotransferase type-1 domain is found at 8–204 (RLLIIDFGSQ…FVRLAGFKGD (197 aa)). Residue C86 is the Nucleophile of the active site. Active-site residues include H179 and E181. In terms of domain architecture, GMPS ATP-PPase spans 205–397 (WTMGAYREEA…LGLPASFIGR (193 aa)). 232–238 (SGGVDSS) is a binding site for ATP.

In terms of assembly, homodimer.

It carries out the reaction XMP + L-glutamine + ATP + H2O = GMP + L-glutamate + AMP + diphosphate + 2 H(+). The protein operates within purine metabolism; GMP biosynthesis; GMP from XMP (L-Gln route): step 1/1. In terms of biological role, catalyzes the synthesis of GMP from XMP. The sequence is that of GMP synthase [glutamine-hydrolyzing] from Roseobacter denitrificans (strain ATCC 33942 / OCh 114) (Erythrobacter sp. (strain OCh 114)).